The chain runs to 210 residues: Small ribosomal subunit protein uS3 (210 aa).

The region spanning 38–106 is the KH type-2 domain; that stretch reads IRAWLKKRLA…EVQINIVEIR (69 aa).

This sequence belongs to the universal ribosomal protein uS3 family. As to quaternary structure, part of the 30S ribosomal subunit. Forms a tight complex with proteins S10 and S14.

Functionally, binds the lower part of the 30S subunit head. Binds mRNA in the 70S ribosome, positioning it for translation. The protein is Small ribosomal subunit protein uS3 of Magnetococcus marinus (strain ATCC BAA-1437 / JCM 17883 / MC-1).